A 152-amino-acid polypeptide reads, in one-letter code: VQ motif-containing protein 8, chloroplastic (152 aa).

Residues 1 to 42 (MIPTRCNEINGSRPSSLKLAGESHTIKKTSSCKSKPRPHGRA) are disordered. Residues 1–58 (MIPTRCNEINGSRPSSLKLAGESHTIKKTSSCKSKPRPHGRASPVIIYAHSPKVIHTR) constitute a chloroplast transit peptide. A VQ motif is present at residues 62–71 (FMALVQRLTG). The interval 80-108 (TSESSSSVVTEEVNVGDDNTAAPFSQDRT) is disordered. The segment covering 81–92 (SESSSSVVTEEV) has biased composition (low complexity).

The protein localises to the plastid. It localises to the chloroplast. May be involved in chloroplast development. The polypeptide is VQ motif-containing protein 8, chloroplastic (Arabidopsis thaliana (Mouse-ear cress)).